The chain runs to 376 residues: Polycomb group protein FIE1 (376 aa).

WD repeat units follow at residues 85 to 127 (DKDE…LLKT), 130 to 170 (GHGD…CILI), 176 to 216 (GHRN…PYVE), 242 to 279 (VHSN…QSPG), 291 to 332 (VPEC…PVLT), and 339 to 376 (QCKS…HPKA).

It belongs to the WD repeat ESC family. Interacts with EZ1. Component of the polycomb repressive complex 2 (PRC2), composed of the core PRC2 components EMF2B, EZ1 and CLF. PRC2 methylates 'Lys-27' residues of histone H3 (H3K27me3), leading to transcriptional repression of the affected target gene. In terms of tissue distribution, widely expressed.

In terms of biological role, polycomb group (PcG) protein. PcG proteins act by forming multiprotein complexes, which are required to maintain the transcriptionally repressive state of homeotic genes throughout development. PcG proteins are not required to initiate repression, but to maintain it during later stages of development. They act via the methylation of histones, rendering chromatin heritably changed in its expressibility. Involved in the regulation of seed endosperm development, grain filling and seed dormancy. FIE2-containing PcG complex in seed endosperm regulates the expression of various transcription factors by trimethylation on histone H3 'Lys-27' (H3K27me3) of target genes. Involved in the overall expression regulation of a large number of nutrient metabolism genes. Involved in the regulation of seed endosperm development. Involved in the regulation of vegetative development, particularly in stem cell maintenance in the root system, where it maintains the suppression of key differentiation regulators. This Oryza sativa subsp. japonica (Rice) protein is Polycomb group protein FIE1.